Reading from the N-terminus, the 275-residue chain is 3-methyl-2-oxobutanoate hydroxymethyltransferase (275 aa).

Mg(2+)-binding residues include Asp55 and Asp94. Residues 55 to 56 (DS), Asp94, and Lys123 each bind 3-methyl-2-oxobutanoate. Residue Glu125 participates in Mg(2+) binding. The active-site Proton acceptor is the Glu192.

The protein belongs to the PanB family. Homodecamer; pentamer of dimers. It depends on Mg(2+) as a cofactor.

It is found in the cytoplasm. The enzyme catalyses 3-methyl-2-oxobutanoate + (6R)-5,10-methylene-5,6,7,8-tetrahydrofolate + H2O = 2-dehydropantoate + (6S)-5,6,7,8-tetrahydrofolate. It participates in cofactor biosynthesis; (R)-pantothenate biosynthesis; (R)-pantoate from 3-methyl-2-oxobutanoate: step 1/2. Catalyzes the reversible reaction in which hydroxymethyl group from 5,10-methylenetetrahydrofolate is transferred onto alpha-ketoisovalerate to form ketopantoate. In Halorhodospira halophila (strain DSM 244 / SL1) (Ectothiorhodospira halophila (strain DSM 244 / SL1)), this protein is 3-methyl-2-oxobutanoate hydroxymethyltransferase.